A 261-amino-acid polypeptide reads, in one-letter code: Imidazole glycerol phosphate synthase subunit HisF (261 aa).

Catalysis depends on residues Asp-11 and Asp-130.

It belongs to the HisA/HisF family. Heterodimer of HisH and HisF.

It is found in the cytoplasm. It carries out the reaction 5-[(5-phospho-1-deoxy-D-ribulos-1-ylimino)methylamino]-1-(5-phospho-beta-D-ribosyl)imidazole-4-carboxamide + L-glutamine = D-erythro-1-(imidazol-4-yl)glycerol 3-phosphate + 5-amino-1-(5-phospho-beta-D-ribosyl)imidazole-4-carboxamide + L-glutamate + H(+). It participates in amino-acid biosynthesis; L-histidine biosynthesis; L-histidine from 5-phospho-alpha-D-ribose 1-diphosphate: step 5/9. In terms of biological role, IGPS catalyzes the conversion of PRFAR and glutamine to IGP, AICAR and glutamate. The HisF subunit catalyzes the cyclization activity that produces IGP and AICAR from PRFAR using the ammonia provided by the HisH subunit. This is Imidazole glycerol phosphate synthase subunit HisF from Heliobacterium mobile (Heliobacillus mobilis).